The following is a 290-amino-acid chain: 3-deoxy-manno-octulosonate cytidylyltransferase, mitochondrial (290 aa).

The transit peptide at 1 to 50 directs the protein to the mitochondrion; it reads MSVCSSSSSSQKTWIVNGILAGTAIAAAIGARAYLGRSKKFRSRVVGIIP.

This sequence belongs to the KdsB family. It depends on Mg(2+) as a cofactor. In terms of tissue distribution, expressed in roots, leaves, stems and siliques.

Its subcellular location is the mitochondrion outer membrane. The catalysed reaction is 3-deoxy-alpha-D-manno-oct-2-ulosonate + CTP = CMP-3-deoxy-beta-D-manno-octulosonate + diphosphate. It functions in the pathway nucleotide-sugar biosynthesis; CMP-3-deoxy-D-manno-octulosonate biosynthesis; CMP-3-deoxy-D-manno-octulosonate from 3-deoxy-D-manno-octulosonate and CTP: step 1/1. Its activity is regulated as follows. Inhibited by 2beta-deoxy-Kdo. Its function is as follows. Catalyzes the production of the sugar nucleotide CMP-3-deoxy-D-manno-octulosonate (CMP-KDO). CTP is the preferred nucleotide donor, but it can partially be replaced with UTP. Activates KDO during the biosynthesis of rhamnogalacturonan II (RG-II), a structurally complex pectic polysaccharide of the primary cell wall. RG-II is essential for the cell wall integrity of rapidly growing tissues and pollen tube growth and elongation. This chain is 3-deoxy-manno-octulosonate cytidylyltransferase, mitochondrial, found in Arabidopsis thaliana (Mouse-ear cress).